A 296-amino-acid chain; its full sequence is tRNA pseudouridine synthase B (296 aa).

Catalysis depends on D38, which acts as the Nucleophile.

It belongs to the pseudouridine synthase TruB family. Type 1 subfamily.

The enzyme catalyses uridine(55) in tRNA = pseudouridine(55) in tRNA. Responsible for synthesis of pseudouridine from uracil-55 in the psi GC loop of transfer RNAs. The protein is tRNA pseudouridine synthase B of Synechocystis sp. (strain ATCC 27184 / PCC 6803 / Kazusa).